Here is a 755-residue protein sequence, read N- to C-terminus: MAAPINQPSTTTQITQTGQTTTTTTVGSLGEHSVTTTGSGAAAQTSQTVTLIADHEMQEIASQDGSAVSFSAEHSFSTLPPETGSVGATAQSAQSAGLFSLSGRTQRRDSEISSSSDGSSISRTSSNASSGETSRAESSPDLGDLDSLSGSERAEGAEGPEGPGGLPESTIPHYDPTDKASILNFLKNPAVQQKMQTKGGHFVYVDEARSSFIFVRNGDWSTAESIKVSNAKTKENITKPADLEMCIAKFCVGYETIHSDWTGRVKPTMEERSGATGNYNHLMLSMKFKTAVVYGPWNAKESSSGYTPSAWRRGAKVETGPIWDDVGGLKGINWKTTPAPDFSFINETPGGGAHSTSHTGPGTPVGATVVPNVNVNLGGIKVDLGGINLGGITTNVTTEEGGGTNITSTKSTSTDDKVSITSTGSQSTIEEDTIQFDDPGQGEDDNAIPGTNTPPPPGPPPNLSSSRLLTISNASLNQVLQNVRQHLNTAYDSNGNSVSDLNQDLGQVVKNSENGVNFPTVILPKTTGDTDPSGQATGGVTEGGGHIRNIIQRNTQSTGQSEGATPTPQPTIAKIVTSLRKANVSSSSVLPQPQVATTITPQARTASTSTTSIGTGTESTSTTSTGTGTGSVSTQSTGVGTPTTTTRSTGTSATTTTSSASTQTPQAPLPSGTRHVATISLVRNAAGRSIVLQQGGRSQSFPIPPSGTGTQNMGAQLWAAASQVASTLGQVVNQAATAGSQPSSRRSSPTSPRRK.

Disordered regions lie at residues 1–44, 72–91, 99–174, 393–467, 523–545, 584–672, and 734–755; these read MAAP…AAAQ, AEHS…ATAQ, FSLS…IPHY, TTNV…SSSR, LPKT…EGGG, VSSS…LPSG, and QAAT…PRRK. Low complexity-rich tracts occupy residues 10–25 and 35–44; these read TTTQ…TTTT and TTTGSGAAAQ. Composition is skewed to low complexity over residues 112 to 130, 139 to 151, and 393 to 412; these read ISSS…NASS, SPDL…LSGS, and TTNV…TKST. The segment covering 429-446 has biased composition (acidic residues); that stretch reads IEEDTIQFDDPGQGEDDN. The segment covering 452–462 has biased composition (pro residues); the sequence is NTPPPPGPPPN. Residues 536 to 545 are compositionally biased toward gly residues; the sequence is ATGGVTEGGG. A compositionally biased stretch (polar residues) spans 590–599; it reads LPQPQVATTI. Composition is skewed to low complexity over residues 600-666 and 740-755; these read TPQA…QTPQ and SQPS…PRRK.

The protein belongs to the chlamydial CPn_0572/CT_456/TC_0741 family.

This is an uncharacterized protein from Chlamydia pneumoniae (Chlamydophila pneumoniae).